We begin with the raw amino-acid sequence, 243 residues long: Secreted RxLR effector protein 28 (243 aa).

Residues 1–26 form the signal peptide; the sequence is MHVSRIIAHIALATAITATTVSPTDA. The short motif at 49–52 is the RxLR element; sequence RGLR. The interval 187–243 is disordered; that stretch reads NVDEDKGQNFGHSVSGPPTTTLTGPHTKSGIPPFENLVAPAKGSMPNTRRNGYQFFE. A compositionally biased stretch (low complexity) spans 199–216; it reads SVSGPPTTTLTGPHTKSG.

This sequence belongs to the RxLR effector family.

It is found in the secreted. Its subcellular location is the host cytoplasm. The protein localises to the host nucleus. Effector that significantly enhances susceptibilities of grapevine and tobacco to pathogens. Acts as a broad suppressor of cell death to interrupt plant immunity. Completely inhibits cell death induced by cell death-inducing proteins, including the PAMP elicitor INF1 from P.infestans. Reduces the transcriptional levels of the defense-related genes and impairs the H(2)O(2) accumulation in N.benthamiana. This is Secreted RxLR effector protein 28 from Plasmopara viticola (Downy mildew of grapevine).